We begin with the raw amino-acid sequence, 1192 residues long: Probable ATP-binding protein BrxC (1192 aa).

This sequence belongs to the BrxC family.

Its function is as follows. BREX systems (bacteriophage exclusion) provide immunity against bacteriophage. A core protein of a type 1 BREX system. This system allows phage adsorption but prevents phage DNA replication, without degradation of the phage DNA. Methylation of bacterial DNA by PglX probably guides self/non-self discrimination. When the brxA-brxB-brxC-pglX and pglZ-brxL operons are transformed into a susceptible B.subtilis strain (BEST7003) they confer resistance to bacteriophages SPbeta, SP16, Zeta, phi3T and SP02 and partial protection to phages SP01 and SP82G (these include lytic and temperate phage). They do not protect against phages phi105, rho10 or rho14. Additionally confers a very slight reduction in efficiency of plasmid transformation. This Bacillus cereus (strain H3081.97) protein is Probable ATP-binding protein BrxC.